Consider the following 379-residue polypeptide: Phospho-N-acetylmuramoyl-pentapeptide-transferase (379 aa).

A run of 10 helical transmembrane segments spans residues 27–47 (FRTA…GPAV), 76–96 (TMGG…WADL), 100–120 (FVWI…TDDY), 135–155 (AKMG…VLVQ), 185–205 (PHIW…VLVG), 218–238 (GLAI…TYVS), 255–275 (VGEL…FLWY), 283–303 (FMGD…AVII), 307–327 (LLLP…ILQV), and 356–376 (KIIV…LTTL).

Belongs to the glycosyltransferase 4 family. MraY subfamily. Requires Mg(2+) as cofactor.

The protein localises to the cell inner membrane. It carries out the reaction UDP-N-acetyl-alpha-D-muramoyl-L-alanyl-gamma-D-glutamyl-meso-2,6-diaminopimeloyl-D-alanyl-D-alanine + di-trans,octa-cis-undecaprenyl phosphate = di-trans,octa-cis-undecaprenyl diphospho-N-acetyl-alpha-D-muramoyl-L-alanyl-D-glutamyl-meso-2,6-diaminopimeloyl-D-alanyl-D-alanine + UMP. Its pathway is cell wall biogenesis; peptidoglycan biosynthesis. In terms of biological role, catalyzes the initial step of the lipid cycle reactions in the biosynthesis of the cell wall peptidoglycan: transfers peptidoglycan precursor phospho-MurNAc-pentapeptide from UDP-MurNAc-pentapeptide onto the lipid carrier undecaprenyl phosphate, yielding undecaprenyl-pyrophosphoryl-MurNAc-pentapeptide, known as lipid I. This chain is Phospho-N-acetylmuramoyl-pentapeptide-transferase, found in Koribacter versatilis (strain Ellin345).